The sequence spans 89 residues: Elongation factor 1-beta (89 aa).

It belongs to the EF-1-beta/EF-1-delta family.

In terms of biological role, promotes the exchange of GDP for GTP in EF-1-alpha/GDP, thus allowing the regeneration of EF-1-alpha/GTP that could then be used to form the ternary complex EF-1-alpha/GTP/AAtRNA. This is Elongation factor 1-beta from Methanococcus maripaludis (strain C5 / ATCC BAA-1333).